A 61-amino-acid chain; its full sequence is Sperm protamine P1 (61 aa).

Residues 1 to 61 (MARYRHSRSR…RRYSRRRRRY (61 aa)) form a disordered region.

This sequence belongs to the protamine P1 family. Testis.

The protein localises to the nucleus. It localises to the chromosome. Functionally, protamines substitute for histones in the chromatin of sperm during the haploid phase of spermatogenesis. They compact sperm DNA into a highly condensed, stable and inactive complex. This Macropus giganteus (Eastern gray kangaroo) protein is Sperm protamine P1 (PRM1).